The primary structure comprises 586 residues: Alpha-1,2-mannosyltransferase MNN5 (586 aa).

Residues 1–29 form the signal peptide; the sequence is MLIRLKKRKILQVIVSAVVLILFFCSVHN. N-linked (GlcNAc...) asparagine glycosylation is found at N113, N136, N259, and N264.

This sequence belongs to the MNN1/MNT family. Post-translationally, glycosylated.

It is found in the golgi apparatus. The protein resides in the cis-Golgi network. The protein operates within protein modification; protein glycosylation. Responsible for addition of first and second mannose residues to the outer chain of core N-linked polysaccharides and to O-linked mannotriose. Implicated in late Golgi modifications. The sequence is that of Alpha-1,2-mannosyltransferase MNN5 (MNN5) from Saccharomyces cerevisiae (strain YJM789) (Baker's yeast).